The following is a 1210-amino-acid chain: Microtubule-associated tumor suppressor 1 homolog (1210 aa).

5 disordered regions span residues 1 to 21, 370 to 404, 446 to 482, 513 to 545, and 585 to 618; these read MNDD…IRDK, DPHI…PYEM, VENG…NTTV, QPKD…LTMM, and HSKN…AGSE. The span at 370–379 shows a compositional bias: basic and acidic residues; sequence DPHIDSHDND. Phosphoserine occurs at positions 375, 380, and 393. Residues 381 to 398 show a composition bias toward polar residues; it reads DIQSSTEELTLRSVSGQR. Basic and acidic residues predominate over residues 446 to 455; sequence VENGPRDAKR. The segment covering 473 to 482 has biased composition (polar residues); that stretch reads KSATKTNTTV. Residues 524-534 are compositionally biased toward low complexity; sequence PSPQVTGGSSP. A compositionally biased stretch (polar residues) spans 585–605; it reads HSKNASLGVPRTTSATKSNQE. S621 is subject to Phosphoserine. Residues 683 to 771 are disordered; that stretch reads SKSLLVGSAP…YEEKPPKQAF (89 aa). A compositionally biased stretch (polar residues) spans 692-702; the sequence is PKTSTTPGRSS. Positions 876 to 1171 form a coiled coil; that stretch reads IQHLLSEREE…RLSMENEELL (296 aa). Phosphoserine occurs at positions 1143, 1164, 1185, 1195, 1199, 1201, 1203, 1204, and 1208. Residues 1177–1210 are disordered; the sequence is GDLCSPKRSPTSSAIPFQSPRNSGSFSSPSISPR. The span at 1195 to 1210 shows a compositional bias: low complexity; sequence SPRNSGSFSSPSISPR.

It belongs to the MTUS1 family. In terms of assembly, homodimer. Interacts with AGTR2. Interacts with PTPN6. Ubiquitously expressed, with highest levels in uterus and adrenal gland.

It localises to the mitochondrion. Its subcellular location is the golgi apparatus. The protein resides in the cell membrane. It is found in the nucleus. In terms of biological role, cooperates with AGTR2 to inhibit ERK2 activation and cell proliferation. May be required for AGTR2 cell surface expression. Together with PTPN6, induces UBE2V2 expression upon angiotensin-II stimulation. The polypeptide is Microtubule-associated tumor suppressor 1 homolog (Mtus1) (Mus musculus (Mouse)).